Here is a 195-residue protein sequence, read N- to C-terminus: U8 snoRNA-decapping enzyme (195 aa).

A Nudix hydrolase domain is found at 18-173 (DWRHACHALL…IGAAREQLLE (156 aa)). The substrate site is built by histidine 24, arginine 50, and phenylalanine 57. Residues glycine 59, glutamate 76, glutamate 80, and histidine 99 each coordinate Mn(2+). The Nudix box signature appears at 61–82 (FVDAQDSCLEDGLNRELREELG). Glutamine 170 lines the substrate pocket. Glutamate 173 serves as a coordination point for Mn(2+).

It belongs to the Nudix hydrolase family. NUDT16 subfamily. In terms of assembly, homodimer. It depends on Mg(2+) as a cofactor. Mn(2+) serves as cofactor. Co(2+) is required as a cofactor. In terms of tissue distribution, expressed in brain, testis, spleen, lung, heart, liver, kidney and muscle (at protein level).

Its subcellular location is the nucleus. It is found in the nucleolus. The protein resides in the nucleoplasm. The protein localises to the cytoplasm. The enzyme catalyses a 5'-end (N(7)-methyl 5'-triphosphoguanosine)-ribonucleoside in mRNA + H2O = N(7)-methyl-GDP + a 5'-end phospho-ribonucleoside in mRNA + 2 H(+). The catalysed reaction is IDP + H2O = IMP + phosphate + H(+). It carries out the reaction dIDP + H2O = dIMP + phosphate + H(+). It catalyses the reaction a 5'-end NAD(+)-phospho-ribonucleoside in mRNA + H2O = a 5'-end phospho-ribonucleoside in mRNA + NAD(+) + H(+). The enzyme catalyses a 5'-end FAD-phospho-ribonucleoside in mRNA + H2O = a 5'-end phospho-adenosine-phospho-ribonucleoside in mRNA + FMN + 2 H(+). The catalysed reaction is a 5'-end CoA-ribonucleoside in mRNA + H2O = a 5'-end phospho-adenosine-phospho-ribonucleoside in mRNA + (R)-4'-phosphopantetheine + 2 H(+). Its function is as follows. RNA-binding and decapping enzyme that catalyzes the cleavage of the cap structure of snoRNAs and mRNAs in a metal-dependent manner. Part of the U8 snoRNP complex that is required for the accumulation of mature 5.8S and 28S rRNA. Has diphosphatase activity and removes m7G and/or m227G caps from U8 snoRNA and leaves a 5'monophosphate on the RNA. Also catalyzes the cleavage of the cap structure on mRNAs. Does not hydrolyze cap analog structures like 7-methylguanosine nucleoside triphosphate (m7GpppG). Also hydrolysis m7G- and m227G U3-capped RNAs but with less efficiencies. Has broad substrate specificity with manganese or cobalt as cofactor and can act on various RNA species. Binds to the U8 snoRNA; metal is not required for RNA-binding. May play a role in the regulation of snoRNAs and mRNAs degradation. Also acts as a phosphatase; hydrolyzes the non-canonical purine nucleotides inosine diphosphate (IDP) and deoxyinosine diphosphate (dITP) as well as guanosine diphosphate (GDP), deoxyguanosine diphosphate (dGDP), xanthine diphosphate (XDP), inosine triphosphate (ITP) and deoxyinosine triphosphate (ITP) to their respective monophosphate derivatives and does not distinguish between the deoxy- and ribose forms. The order of activity with different substrates is IDP &gt; dIDP &gt;&gt; GDP = dGDP &gt; XDP = ITP = dITP. Binds strongly to GTP, ITP and XTP. Participates in the hydrolysis of dIDP/IDP and probably excludes non-canonical purines from RNA and DNA precursor pools, thus preventing their incorporation into RNA and DNA and avoiding chromosomal lesions. Exhibits decapping activity towards NAD-capped RNAs and FAD-capped RNAs. Exhibits decapping activity towards dpCoA-capped RNAs in vitro. The protein is U8 snoRNA-decapping enzyme (Nudt16) of Mus musculus (Mouse).